Reading from the N-terminus, the 473-residue chain is MFRLRFIPAVAGLAAVSRRYHGVANHARSRRRLMMAAFVGATAVSASAGLLWKRANAEAQSSVKHSMREETSEKEKEDADQAVESSDEDQPQEGKKKKARVGFRDRKVMEYENRIRAYSTPDKIFRYFATLKVIHESGESEVFMTPQDFVRSITPNEKQPENLGLDQFIIKRYDGKKISQEREKFADEDSIFYSLGECGLISFSDYIFLTTVLSTPQRNFEIAFKMFDLNGDGEVDMEEFEQVQSIIRSQTSMGMRHRDRSTTGNTLKTGFSSALTTYFFGADLKGKLTIKNFLEFQRKLQHDVLKLEFERHDPVDGHITERQFGSMLLAYSGVQSKKLTHMLKQLKKRFKDAEGLTFEEVENFFTFLKNINDVDTALSFYHMAGASLDKVTMQQVARTVAKVELSDHVCDVVFALFDCDGNGELSNKEFIAIMKQRLMRGLEKPKDMGFTRLMRAMWKCAQETAWDFAMPKQ.

The N-terminal 33 residues, methionine 1–leucine 33, are a transit peptide targeting the mitochondrion. The disordered stretch occupies residues serine 61 to valine 101. Basic and acidic residues predominate over residues serine 66–alanine 79. Residues aspartate 80–proline 91 are compositionally biased toward acidic residues. The segment at lysine 96 to lysine 107 is polybasic region. Residues lysine 123–arginine 126 form a k/R-ring region. The EF-hand 1 domain occupies threonine 215 to glutamine 250. 5 residues coordinate Ca(2+): aspartate 228, asparagine 230, aspartate 232, glutamate 234, and glutamate 239. Residues arginine 256–arginine 260 are k/R-ring. In terms of domain architecture, EF-hand 2 spans leucine 405 to arginine 440. Aspartate 418, aspartate 420, asparagine 422, glutamate 424, and glutamate 429 together coordinate Ca(2+). Positions arginine 452–glutamine 462 are C-helix region.

The protein belongs to the MICU1 family. MICU1 subfamily. In terms of assembly, heterodimer; disulfide-linked; heterodimerizes with micu2. Component of the uniplex complex.

The protein localises to the mitochondrion intermembrane space. The protein resides in the mitochondrion inner membrane. Calcium sensor of the mitochondrial calcium uniporter (mcu) channel, which senses calcium level via its EF-hand domains. micu1 and micu2 form a disulfide-linked heterodimer that stimulates and inhibits MCU activity, depending on the concentration of calcium. At low calcium levels, micu1 occludes the pore of the MCU channel, preventing mitochondrial calcium uptake. At higher calcium levels, calcium-binding to micu1 and micu2 induces a conformational change that weakens mcu-micu1 interactions and moves the micu1-micu2 heterodimer away from the pore, allowing calcium permeation through the mcu channel. Also required to protect against manganese toxicity by preventing manganese uptake by mcu. This Xenopus tropicalis (Western clawed frog) protein is Calcium uptake protein 1, mitochondrial (micu1).